The primary structure comprises 85 residues: Large ribosomal subunit protein bL31 (85 aa).

Positions 65-85 (YGMGGAGKAGEDKKAGDKADA) are disordered. The segment covering 73–85 (AGEDKKAGDKADA) has biased composition (basic and acidic residues).

The protein belongs to the bacterial ribosomal protein bL31 family. Type A subfamily. As to quaternary structure, part of the 50S ribosomal subunit.

Functionally, binds the 23S rRNA. The sequence is that of Large ribosomal subunit protein bL31 from Synechococcus sp. (strain WH7803).